The following is an 86-amino-acid chain: Large ribosomal subunit protein uL23 (86 aa).

It belongs to the universal ribosomal protein uL23 family. Part of the 50S ribosomal subunit. Contacts protein L29.

Binds to 23S rRNA. One of the proteins that surrounds the polypeptide exit tunnel on the outside of the ribosome. This chain is Large ribosomal subunit protein uL23, found in Methanococcus maripaludis (strain C6 / ATCC BAA-1332).